We begin with the raw amino-acid sequence, 467 residues long: Glutamate--tRNA ligase (467 aa).

Positions 9–19 (PSPTGYLHIGG) match the 'HIGH' region motif. Positions 237–241 (KLSKR) match the 'KMSKS' region motif. Position 240 (Lys-240) interacts with ATP.

The protein belongs to the class-I aminoacyl-tRNA synthetase family. Glutamate--tRNA ligase type 1 subfamily. In terms of assembly, monomer.

The protein resides in the cytoplasm. The enzyme catalyses tRNA(Glu) + L-glutamate + ATP = L-glutamyl-tRNA(Glu) + AMP + diphosphate. Functionally, catalyzes the attachment of glutamate to tRNA(Glu) in a two-step reaction: glutamate is first activated by ATP to form Glu-AMP and then transferred to the acceptor end of tRNA(Glu). The sequence is that of Glutamate--tRNA ligase from Xanthomonas campestris pv. campestris (strain B100).